A 401-amino-acid polypeptide reads, in one-letter code: uncharacterized protein (401 aa).

This is an uncharacterized protein from Acanthamoeba polyphaga mimivirus (APMV).